The chain runs to 157 residues: Ribosome maturation factor RimP (157 aa).

This sequence belongs to the RimP family.

The protein resides in the cytoplasm. In terms of biological role, required for maturation of 30S ribosomal subunits. This is Ribosome maturation factor RimP from Streptococcus thermophilus (strain ATCC BAA-491 / LMD-9).